Here is a 196-residue protein sequence, read N- to C-terminus: MTREKNPLPITFYQKTALELAPSLLGCLLVKETDEGTASGYIVETEAYMGAGDRAAHSFNNRRTKRTEIMFAEAGRVYTYVMHTHTLLNVVAAEEDVPQAVLIRAIEPHEGQLLMEERRPGRSPREWTNGPGKLTKALGVTMNDYGRWITEQPLYIESGYTPEAISTGPRIGIDNSGEARDYPWRFWVTGNRYVSR.

The protein belongs to the DNA glycosylase MPG family.

This is Putative 3-methyladenine DNA glycosylase (yxlJ) from Bacillus subtilis (strain 168).